Consider the following 621-residue polypeptide: Leucine aminopeptidase (621 aa).

Positions 1 to 73 (MPLLRSSQHI…ISNRKEFRKM (73 aa)) are excised as a propeptide. The tract at residues 129–152 (SSSGGSGGNGGSAGSSGNGEGGAQ) is disordered. The segment covering 132–150 (GGSGGNGGSAGSSGNGEGG) has biased composition (gly residues). 3 residues coordinate a peptide: Lys-390, Asp-395, and Lys-402. Residues Lys-390 and Asp-395 each contribute to the Zn(2+) site. An L13 loop region spans residues 400–417 (NLKAAPGSMIDLMKFDMS). Lys-402 is a catalytic residue. Zn(2+) contacts are provided by Asp-410, Met-412, Asp-415, Asp-475, and Glu-477. Positions 415 and 475 each coordinate a peptide. Arg-479 is a catalytic residue.

It belongs to the peptidase M17 family. Homohexamer composed of dimer of trimers. Both the identity and concentration of metal ions available dictate the extent to which oligomerization occurs; Mn(2+) and Co(2+) induces oligomerization, whereas Mg(2+) has no effect, and Zn(2+) causes irreversible protein aggregation in vitro. The cofactor is Zn(2+).

Its subcellular location is the cytoplasm. It catalyses the reaction Release of an N-terminal amino acid, Xaa-|-Yaa-, in which Xaa is preferably Leu, but may be other amino acids including Pro although not Arg or Lys, and Yaa may be Pro. Amino acid amides and methyl esters are also readily hydrolyzed, but rates on arylamides are exceedingly low.. It carries out the reaction L-cysteinylglycine + H2O = L-cysteine + glycine. With respect to regulation, oligomerization is required for catalytic activity and is metal-dependent. The type of metal that binds the 2 metal binding sites influences catalytic activity and substrate specificity. In vitro, activated by Co(2+), Mn(2+), Ni(2+), Mg(2+) and Zn(2+) with decreasing strength. Occupancy of the site 2 is essential and sufficient for activating the enzyme but occupation of the 2 sites is necessary for full catalytic activity. Inhibited by Ca(2+). Inhibited by fungal metabolite bestatin. Functionally, aminopeptidase which preferentially cleaves leucine residues from the N-terminus of peptides. Also, has some activity towards tryptophan and methionine and has very low activity towards alanine, arginine, asparagine, phenylalanine and tyrosine. No activity towards histidine, serine, valine, isoleucine, glycine, aspartic acid and glutamic acid. In addition, cleaves the Cys-Gly dipeptide, probably as part of the glutathione regulation pathway; cleavage only occurs in the presence of Mn(2+). Plays a role in the final step of host hemoglobin catabolism, by cleaving hemoglobin-derived oligopeptides providing a source of amino acids for the parasite protein synthesis and for the maintenance of osmotic homeostasis. The protein is Leucine aminopeptidase of Plasmodium vivax (strain Salvador I).